The following is a 30-amino-acid chain: Photosystem I reaction center subunit XII (30 aa).

A helical membrane pass occupies residues Ile7 to Lys26.

The protein belongs to the PsaM family.

The protein resides in the plastid. It localises to the chloroplast thylakoid membrane. The protein is Photosystem I reaction center subunit XII of Porphyra purpurea (Red seaweed).